Consider the following 348-residue polypeptide: ECA polysaccharide chain length modulation protein (348 aa).

The next 2 helical transmembrane spans lie at 31 to 51 (FWII…TFFA) and 323 to 343 (AFLM…VALT).

This sequence belongs to the WzzB/Cld/Rol family. As to quaternary structure, probably part of a complex composed of WzxE, WzyE and WzzE.

The protein resides in the cell inner membrane. It functions in the pathway bacterial outer membrane biogenesis; enterobacterial common antigen biosynthesis. Functionally, modulates the polysaccharide chain length of enterobacterial common antigen (ECA). This is ECA polysaccharide chain length modulation protein from Salmonella typhimurium (strain LT2 / SGSC1412 / ATCC 700720).